Reading from the N-terminus, the 329-residue chain is 4-hydroxythreonine-4-phosphate dehydrogenase (329 aa).

Substrate is bound by residues His-136 and Thr-137. His-166, His-211, and His-266 together coordinate a divalent metal cation. Lys-274, Asn-283, and Arg-292 together coordinate substrate.

This sequence belongs to the PdxA family. In terms of assembly, homodimer. Zn(2+) is required as a cofactor. It depends on Mg(2+) as a cofactor. Requires Co(2+) as cofactor.

The protein resides in the cytoplasm. It carries out the reaction 4-(phosphooxy)-L-threonine + NAD(+) = 3-amino-2-oxopropyl phosphate + CO2 + NADH. It participates in cofactor biosynthesis; pyridoxine 5'-phosphate biosynthesis; pyridoxine 5'-phosphate from D-erythrose 4-phosphate: step 4/5. In terms of biological role, catalyzes the NAD(P)-dependent oxidation of 4-(phosphooxy)-L-threonine (HTP) into 2-amino-3-oxo-4-(phosphooxy)butyric acid which spontaneously decarboxylates to form 3-amino-2-oxopropyl phosphate (AHAP). The polypeptide is 4-hydroxythreonine-4-phosphate dehydrogenase (Shigella boydii serotype 18 (strain CDC 3083-94 / BS512)).